Here is a 502-residue protein sequence, read N- to C-terminus: ATP synthase subunit alpha (502 aa).

ATP is bound at residue 169 to 176 (GDRQTGKT).

Belongs to the ATPase alpha/beta chains family. F-type ATPases have 2 components, CF(1) - the catalytic core - and CF(0) - the membrane proton channel. CF(1) has five subunits: alpha(3), beta(3), gamma(1), delta(1), epsilon(1). CF(0) has three main subunits: a(1), b(2) and c(9-12). The alpha and beta chains form an alternating ring which encloses part of the gamma chain. CF(1) is attached to CF(0) by a central stalk formed by the gamma and epsilon chains, while a peripheral stalk is formed by the delta and b chains.

The protein resides in the cell membrane. The enzyme catalyses ATP + H2O + 4 H(+)(in) = ADP + phosphate + 5 H(+)(out). Its function is as follows. Produces ATP from ADP in the presence of a proton gradient across the membrane. The alpha chain is a regulatory subunit. The chain is ATP synthase subunit alpha from Bacillus pumilus (strain SAFR-032).